Reading from the N-terminus, the 717-residue chain is Polyribonucleotide nucleotidyltransferase (717 aa).

Residues D486 and D492 each coordinate Mg(2+). In terms of domain architecture, KH spans 553 to 612 (PKIVQLQIDIDKISLVIGSTGKTVKAITDEFEVRVQIEQDGRITLFGTDSLKMQKAKAKI). Residues 622–715 (GEIYDGIVKK…KFGKIELELV (94 aa)) form the S1 motif domain. The disordered stretch occupies residues 659–689 (RYGDMRHSRYGSGRHSRYGRDNRNTFGMNPP). Basic residues predominate over residues 666-675 (SRYGSGRHSR).

It belongs to the polyribonucleotide nucleotidyltransferase family. Mg(2+) serves as cofactor.

The protein localises to the cytoplasm. It carries out the reaction RNA(n+1) + phosphate = RNA(n) + a ribonucleoside 5'-diphosphate. Involved in mRNA degradation. Catalyzes the phosphorolysis of single-stranded polyribonucleotides processively in the 3'- to 5'-direction. The chain is Polyribonucleotide nucleotidyltransferase from Borrelia hermsii (strain HS1 / DAH).